Consider the following 413-residue polypeptide: Hemocyanin type 2 unit e (413 aa).

The N-linked (GlcNAc...) (high mannose) asparagine glycan is linked to Asn-17. His-49 serves as a coordination point for Cu cation. Cys-55 and Cys-66 are oxidised to a cystine. Positions Cys-67–His-69 form a cross-link, 2'-(S-cysteinyl)-histidine (Cys-His). Residues His-69 and His-78 each contribute to the Cu cation site. A glycan (N-linked (GlcNAc...) (high mannose) asparagine) is linked at Asn-127. 2 disulfides stabilise this stretch: Cys-179/Cys-246 and Cys-336/Cys-342. 3 residues coordinate Cu cation: His-189, His-193, and His-220.

Belongs to the tyrosinase family. Hemocyanin subfamily. In terms of assembly, decamers of large identical subunits, each containing 8 globular oxygen-binding functional units. The cofactor is Cu(2+). Hemolymph.

It is found in the secreted. The protein resides in the extracellular space. Its function is as follows. Hemocyanins are copper-containing oxygen carriers occurring freely dissolved in the hemolymph of many mollusks and arthropods. The protein is Hemocyanin type 2 unit e of Rapana venosa (Veined rapa whelk).